Here is a 156-residue protein sequence, read N- to C-terminus: Small ribosomal subunit protein uS7 (156 aa).

Belongs to the universal ribosomal protein uS7 family. Part of the 30S ribosomal subunit. Contacts proteins S9 and S11.

Functionally, one of the primary rRNA binding proteins, it binds directly to 16S rRNA where it nucleates assembly of the head domain of the 30S subunit. Is located at the subunit interface close to the decoding center, probably blocks exit of the E-site tRNA. This chain is Small ribosomal subunit protein uS7, found in Natranaerobius thermophilus (strain ATCC BAA-1301 / DSM 18059 / JW/NM-WN-LF).